Consider the following 105-residue polypeptide: Co-chaperonin GroES 3 (105 aa).

It belongs to the GroES chaperonin family. Heptamer of 7 subunits arranged in a ring. Interacts with the chaperonin GroEL.

It is found in the cytoplasm. Together with the chaperonin GroEL, plays an essential role in assisting protein folding. The GroEL-GroES system forms a nano-cage that allows encapsulation of the non-native substrate proteins and provides a physical environment optimized to promote and accelerate protein folding. GroES binds to the apical surface of the GroEL ring, thereby capping the opening of the GroEL channel. This is Co-chaperonin GroES 3 from Rhizobium meliloti (strain 1021) (Ensifer meliloti).